A 624-amino-acid polypeptide reads, in one-letter code: ABC transporter G family member 23 (624 aa).

An ABC transporter domain is found at 52-296 (LTVTNLSYTI…IAKLGFQIPE (245 aa)). 84 to 91 (GPSGTGKS) is an ATP binding site. The ABC transmembrane type-2 domain maps to 350 to 560 (TEISYLCSRF…PLESMVVNEY (211 aa)). 6 consecutive transmembrane segments (helical) span residues 369-389 (LFLA…SVYT), 402-422 (LGLF…ALPI), 450-470 (IAFV…VYWI), 480-500 (FSFF…LVLF), 511-531 (GNSL…YFIP), and 595-615 (INVG…WGIL).

This sequence belongs to the ABC transporter superfamily. ABCG family. Eye pigment precursor importer (TC 3.A.1.204) subfamily.

The protein resides in the membrane. In Arabidopsis thaliana (Mouse-ear cress), this protein is ABC transporter G family member 23 (ABCG23).